Reading from the N-terminus, the 93-residue chain is Small ribosomal subunit protein uS19 (93 aa).

The tract at residues 73–93 (EFSPTRTYRGHDKKDKKIQKK) is disordered.

Belongs to the universal ribosomal protein uS19 family.

Its function is as follows. Protein S19 forms a complex with S13 that binds strongly to the 16S ribosomal RNA. The sequence is that of Small ribosomal subunit protein uS19 from Phytoplasma mali (strain AT).